We begin with the raw amino-acid sequence, 450 residues long: Ammonium transporter Rh type A (450 aa).

At 1–4 (MRFK) the chain is on the cytoplasmic side. The helical transmembrane segment at 5 to 25 (FSLIALSLEVVMIVSFALFVE) threads the bilayer. At 26–72 (YETSQNGSQKSASQQNASQQNAAAQQNASQQGNASSPAKEDQFFQLY) the chain is on the extracellular side. N-linked (GlcNAc...) asparagine glycosylation is found at N31, N41, N52, and N58. The disordered stretch occupies residues 34–61 (QKSASQQNASQQNAAAQQNASQQGNASS). Residues 73–93 (PLFQHVHVMIFVGFGFLMTFL) traverse the membrane as a helical segment. At 94–97 (KKYG) the chain is on the cytoplasmic side. The helical transmembrane segment at 98-118 (FSGVGFNLFLAALGLQWGTIV) threads the bilayer. Residues 119-134 (QGLLHSHGLKFPFRIK) lie on the Extracellular side of the membrane. Residues 135-155 (NMINADFSTATVLISFGAVLG) traverse the membrane as a helical segment. Residues 156 to 159 (KTSP) are Cytoplasmic-facing. A helical membrane pass occupies residues 160–180 (IQMIIMTILEIAVFAGNEHLV). At 181–189 (TEIFKASDT) the chain is on the extracellular side. Residues 190–210 (GASMTIHAFGAYFGLAVAGVL) traverse the membrane as a helical segment. The Cytoplasmic segment spans residues 211 to 229 (YRSGLKHGHPNEESVYHSD). The chain crosses the membrane as a helical span at residues 230 to 250 (LFAMIGTLFLWMFWPSFNSAI). Over 251–260 (AQPENNQYRA) the chain is Extracellular. The helical transmembrane segment at 261-281 (IVNTYMSLAACVITAYALSSL) threads the bilayer. Over 282–289 (VERRGRLD) the chain is Cytoplasmic. A helical transmembrane segment spans residues 290–307 (MVHIQNATLAGGVAVGTC). Over 308 to 311 (ADME) the chain is Extracellular. A helical transmembrane segment spans residues 312 to 332 (IPLYFAMTIGSIAGIISVLGY). Residues 333-349 (KFLSPLLAHKLMIHDTC) are Cytoplasmic-facing. The chain crosses the membrane as a helical span at residues 350–370 (GVHNLHGLPGVFGGLASIVAI). The Extracellular portion of the chain corresponds to 371-384 (SWGKSTVSTMAMQA). Residues 385–405 (TALGSSIGSAIVGGLVTGLIL) traverse the membrane as a helical segment. The Cytoplasmic segment spans residues 406–450 (KLPVWNQPPDEYCFDDSVSWKVPKYRELDNYFFQHVTHNHVEHEV).

This sequence belongs to the ammonium transporter (TC 2.A.49) family. Rh subfamily. Homodimer. Heterotrimer; a RHCE monomer interacts with a RHAG homodimer. Component of the ankyrin-1 complex in the erythrocyte, composed of ANK1, RHCE, RHAG, SLC4A1, EPB42, GYPA, GYPB and AQP1. Interacts with GYPB (via the N-terminal); this interaction bridges the (RHAG)2(RHCE) heterotrimer with the SLC4A1 Band 3 I dimer complexed with GYPA. Post-translationally, glycosylated.

It is found in the membrane. It catalyses the reaction methylamine(out) = methylamine(in). It carries out the reaction NH4(+)(in) = NH4(+)(out). The enzyme catalyses CO2(out) = CO2(in). Functionally, component of the ankyrin-1 complex, a multiprotein complex involved in the stability and shape of the erythrocyte membrane. Heterotrimer with RHCE (RHAG)2(RHCE), that transports ammonium and its related derivative methylammonium, in both neutral and ionic forms, across the erythrocyte membrane. The transport of NH4(+) is electrogenic and masks the NH3 transport. Also, may act as a CO2 channel. Moreover in erythrocyte, regulates RHD membrane expression and is associated with rhesus blood group antigen expression. This chain is Ammonium transporter Rh type A, found in Rattus norvegicus (Rat).